Reading from the N-terminus, the 449-residue chain is UDP-N-acetylmuramoylalanine--D-glutamate ligase (449 aa).

113-119 (GTNGKTT) is a binding site for ATP.

It belongs to the MurCDEF family.

It localises to the cytoplasm. It catalyses the reaction UDP-N-acetyl-alpha-D-muramoyl-L-alanine + D-glutamate + ATP = UDP-N-acetyl-alpha-D-muramoyl-L-alanyl-D-glutamate + ADP + phosphate + H(+). Its pathway is cell wall biogenesis; peptidoglycan biosynthesis. Functionally, cell wall formation. Catalyzes the addition of glutamate to the nucleotide precursor UDP-N-acetylmuramoyl-L-alanine (UMA). This Microcystis aeruginosa (strain NIES-843 / IAM M-2473) protein is UDP-N-acetylmuramoylalanine--D-glutamate ligase.